Consider the following 209-residue polypeptide: Ribonuclease HII (209 aa).

The 191-residue stretch at 19-209 (CIIVGVDEVG…LPGITKLYSK (191 aa)) folds into the RNase H type-2 domain. Residues Asp-25, Glu-26, and Asp-118 each contribute to the a divalent metal cation site.

This sequence belongs to the RNase HII family. It depends on Mn(2+) as a cofactor. The cofactor is Mg(2+).

It localises to the cytoplasm. It carries out the reaction Endonucleolytic cleavage to 5'-phosphomonoester.. Functionally, endonuclease that specifically degrades the RNA of RNA-DNA hybrids. In Ehrlichia canis (strain Jake), this protein is Ribonuclease HII.